Reading from the N-terminus, the 231-residue chain is GTP cyclohydrolase III (231 aa).

It belongs to the archaeal-type GTP cyclohydrolase family.

It carries out the reaction GTP + 3 H2O = 2-amino-5-formylamino-6-(5-phospho-D-ribosylamino)pyrimidin-4(3H)-one + 2 phosphate + 2 H(+). Catalyzes the formation of 2-amino-5-formylamino-6-ribofuranosylamino-4(3H)-pyrimidinone ribonucleotide monophosphate and inorganic phosphate from GTP. Also has an independent pyrophosphate phosphohydrolase activity. The protein is GTP cyclohydrolase III of Saccharolobus solfataricus (strain ATCC 35092 / DSM 1617 / JCM 11322 / P2) (Sulfolobus solfataricus).